Consider the following 260-residue polypeptide: MVLIRVQANLLILQLSYAQKSSELIIGGDECNINEHRFLVALYTSRSRRFYCGGTLINQEWVLTAAHCDRKNIRIKLGMHSEKVPNEDAETRVPKEKFFCLSSKTYTKWDKDIMLMRLKRPVNNSTHIAPVSLPSNPPSVDSVCRVMGWGTITSPQETYPDVPHCANINILDYEVCQAAHGGLPATSRTLCAGILKGGKDSCKGDSGGPLICNGQFQGIASWGAHPCGQSLKPGVYTKVFDYTEWIQSIIAGNTDATCPP.

Residues 1-18 (MVLIRVQANLLILQLSYA) form the signal peptide. Residues 19-24 (QKSSEL) constitute a propeptide that is removed on maturation. The 228-residue stretch at 25-252 (IIGGDECNIN…TEWIQSIIAG (228 aa)) folds into the Peptidase S1 domain. 6 disulfide bridges follow: cysteine 31–cysteine 165, cysteine 52–cysteine 68, cysteine 100–cysteine 258, cysteine 144–cysteine 212, cysteine 176–cysteine 191, and cysteine 202–cysteine 227. Active-site charge relay system residues include histidine 67 and aspartate 112. Asparagine 123 and asparagine 124 each carry an N-linked (GlcNAc...) asparagine glycan. The active-site Charge relay system is the serine 206.

It belongs to the peptidase S1 family. Snake venom subfamily. As to quaternary structure, monomer. As to expression, expressed by the venom gland.

It is found in the secreted. Its activity is regulated as follows. Completely inhibited by PMSF, and N-tosyl-Lphenylalanine chloromethyl ketone (TPCK) and poorly inhibited by benzamidine and derivates. Not inhibited by EDTA, heparin and hirudin. Thrombin-like snake venom serine protease. The recombinant form clots fibrinogen by cleaving fibrinogen Aalpha chain (FGA), and slowly Bbeta chain (FGB). Has amidolytic activities. The chain is Thrombin-like enzyme gloshedobin from Gloydius shedaoensis (Shedao island pit viper).